A 420-amino-acid polypeptide reads, in one-letter code: Gamma-glutamyl phosphate reductase (420 aa).

This sequence belongs to the gamma-glutamyl phosphate reductase family.

The protein localises to the cytoplasm. It catalyses the reaction L-glutamate 5-semialdehyde + phosphate + NADP(+) = L-glutamyl 5-phosphate + NADPH + H(+). The protein operates within amino-acid biosynthesis; L-proline biosynthesis; L-glutamate 5-semialdehyde from L-glutamate: step 2/2. Catalyzes the NADPH-dependent reduction of L-glutamate 5-phosphate into L-glutamate 5-semialdehyde and phosphate. The product spontaneously undergoes cyclization to form 1-pyrroline-5-carboxylate. The polypeptide is Gamma-glutamyl phosphate reductase (Chlorobium luteolum (strain DSM 273 / BCRC 81028 / 2530) (Pelodictyon luteolum)).